The chain runs to 198 residues: 7-methyl-GTP pyrophosphatase (198 aa).

Residue aspartate 75 is the Proton acceptor of the active site.

This sequence belongs to the Maf family. YceF subfamily. A divalent metal cation serves as cofactor.

The protein localises to the cytoplasm. It catalyses the reaction N(7)-methyl-GTP + H2O = N(7)-methyl-GMP + diphosphate + H(+). Its function is as follows. Nucleoside triphosphate pyrophosphatase that hydrolyzes 7-methyl-GTP (m(7)GTP). May have a dual role in cell division arrest and in preventing the incorporation of modified nucleotides into cellular nucleic acids. The sequence is that of 7-methyl-GTP pyrophosphatase from Bartonella henselae (strain ATCC 49882 / DSM 28221 / CCUG 30454 / Houston 1) (Rochalimaea henselae).